The sequence spans 353 residues: Photosystem II protein D1 (353 aa).

A run of 3 helical transmembrane segments spans residues Tyr-29 to Ile-46, His-118 to Leu-133, and Trp-142 to Ala-156. Chlorophyll a is bound at residue His-118. A pheophytin a-binding site is contributed by Tyr-126. The [CaMn4O5] cluster site is built by Asp-170 and Glu-189. Residues Phe-197 to Leu-218 form a helical membrane-spanning segment. Position 198 (His-198) interacts with chlorophyll a. Residues His-215 and Ser-264 to Phe-265 contribute to the a quinone site. His-215 contacts Fe cation. His-272 is a binding site for Fe cation. Residues Phe-274–Leu-288 form a helical membrane-spanning segment. [CaMn4O5] cluster contacts are provided by His-332, Glu-333, Asp-342, and Ala-344. A propeptide spanning residues Ala-345–Gly-353 is cleaved from the precursor.

The protein belongs to the reaction center PufL/M/PsbA/D family. PSII is composed of 1 copy each of membrane proteins PsbA, PsbB, PsbC, PsbD, PsbE, PsbF, PsbH, PsbI, PsbJ, PsbK, PsbL, PsbM, PsbT, PsbX, PsbY, PsbZ, Psb30/Ycf12, peripheral proteins PsbO, CyanoQ (PsbQ), PsbU, PsbV and a large number of cofactors. It forms dimeric complexes. The cofactor is The D1/D2 heterodimer binds P680, chlorophylls that are the primary electron donor of PSII, and subsequent electron acceptors. It shares a non-heme iron and each subunit binds pheophytin, quinone, additional chlorophylls, carotenoids and lipids. D1 provides most of the ligands for the Mn4-Ca-O5 cluster of the oxygen-evolving complex (OEC). There is also a Cl(-1) ion associated with D1 and D2, which is required for oxygen evolution. The PSII complex binds additional chlorophylls, carotenoids and specific lipids.. In terms of processing, tyr-161 forms a radical intermediate that is referred to as redox-active TyrZ, YZ or Y-Z. Post-translationally, C-terminally processed by CtpA; processing is essential to allow assembly of the oxygen-evolving complex and thus photosynthetic growth.

It is found in the cellular thylakoid membrane. The enzyme catalyses 2 a plastoquinone + 4 hnu + 2 H2O = 2 a plastoquinol + O2. In terms of biological role, photosystem II (PSII) is a light-driven water:plastoquinone oxidoreductase that uses light energy to abstract electrons from H(2)O, generating O(2) and a proton gradient subsequently used for ATP formation. It consists of a core antenna complex that captures photons, and an electron transfer chain that converts photonic excitation into a charge separation. The D1/D2 (PsbA/PsbD) reaction center heterodimer binds P680, the primary electron donor of PSII as well as several subsequent electron acceptors. The sequence is that of Photosystem II protein D1 from Prochlorothrix hollandica.